A 347-amino-acid chain; its full sequence is Phosphoribosylformylglycinamidine cyclo-ligase (347 aa).

It belongs to the AIR synthase family.

The protein resides in the cytoplasm. It catalyses the reaction 2-formamido-N(1)-(5-O-phospho-beta-D-ribosyl)acetamidine + ATP = 5-amino-1-(5-phospho-beta-D-ribosyl)imidazole + ADP + phosphate + H(+). Its pathway is purine metabolism; IMP biosynthesis via de novo pathway; 5-amino-1-(5-phospho-D-ribosyl)imidazole from N(2)-formyl-N(1)-(5-phospho-D-ribosyl)glycinamide: step 2/2. This chain is Phosphoribosylformylglycinamidine cyclo-ligase, found in Alkaliphilus metalliredigens (strain QYMF).